We begin with the raw amino-acid sequence, 170 residues long: Nicotinamide-nucleotide adenylyltransferase (170 aa).

It belongs to the archaeal NMN adenylyltransferase family.

Its subcellular location is the cytoplasm. It catalyses the reaction beta-nicotinamide D-ribonucleotide + ATP + H(+) = diphosphate + NAD(+). It participates in cofactor biosynthesis; NAD(+) biosynthesis; NAD(+) from nicotinamide D-ribonucleotide: step 1/1. This chain is Nicotinamide-nucleotide adenylyltransferase, found in Methanothrix thermoacetophila (strain DSM 6194 / JCM 14653 / NBRC 101360 / PT) (Methanosaeta thermophila).